The sequence spans 243 residues: Protein canopy homolog 3 (243 aa).

The N-terminal stretch at 1 to 15 is a signal peptide; the sequence is MWFLFLLLPLWAGCA. Residues 27 to 236 form the Saposin B-type domain; sequence SKCEVCKYVA…KEEKKQMDQP (210 aa). 3 disulfides stabilise this stretch: C29/C188, C32/C176, and C86/C148. Residues 136 to 160 are a coiled coil; it reads ETSAEVADMKKQCDVMMENYEEVIE. The segment at 186–243 is disordered; that stretch reads QSCLSEQGDSRKGDTGPSTGTKKQKKQGEKKNKSKKQNSGSKEEKKQMDQPMAAKEEL. The segment covering 226–243 has biased composition (basic and acidic residues); that stretch reads SKEEKKQMDQPMAAKEEL.

This sequence belongs to the canopy family.

Its subcellular location is the endoplasmic reticulum. Its function is as follows. Toll-like receptor (TLR)-specific co-chaperone for HSP90B1. Required for proper TLR folding and hence controls TLR exit from the endoplasmic reticulum. Consequently, required for immune responses. In Xenopus laevis (African clawed frog), this protein is Protein canopy homolog 3 (cnpy3).